We begin with the raw amino-acid sequence, 230 residues long: Interleukin-22 receptor subunit alpha-2 (230 aa).

The N-terminal stretch at 1 to 20 (MMPKHCLLGLLIILLSSATE) is a signal peptide. 2 consecutive Fibronectin type-III domains span residues 29–128 (TPQK…TKLD) and 129–230 (PPVV…VHIP). Disulfide bonds link Cys77–Cys85 and Cys205–Cys226.

This sequence belongs to the type II cytokine receptor family. As to expression, highly expressed in lymph nodes and at lower levels in lung, spleen, and thymus. Not expressed in kidney, liver and heart.

Its subcellular location is the secreted. Functionally, receptor for IL22. Binds to IL22, prevents interaction with the functional IL-22R complex and blocks the activity of IL22 (in vitro). May play an important role as an IL22 antagonist in the regulation of inflammatory responses. This chain is Interleukin-22 receptor subunit alpha-2 (Il22ra2), found in Mus musculus (Mouse).